We begin with the raw amino-acid sequence, 265 residues long: Phosphatidylglycerol--prolipoprotein diacylglyceryl transferase (265 aa).

Transmembrane regions (helical) follow at residues 17-37 (VAVRWYGLMYLLAFVLFVVLG), 57-77 (LLLYGVLGVIIGGRLGEVLFY), 89-109 (ILAVWKGGMSFHGGFLGVLVA), 127-147 (FIAPLVPTGLAAGRIGNFING), 176-196 (QLYQAAGEGLLLFAIVWVFAA), 201-218 (LRAVSAVFLIGYGSLRFV), and 233-253 (LVPGLSTAQWLCVPMVVVGLA). Arg140 is a binding site for a 1,2-diacyl-sn-glycero-3-phospho-(1'-sn-glycerol).

This sequence belongs to the Lgt family.

It localises to the cell inner membrane. The catalysed reaction is L-cysteinyl-[prolipoprotein] + a 1,2-diacyl-sn-glycero-3-phospho-(1'-sn-glycerol) = an S-1,2-diacyl-sn-glyceryl-L-cysteinyl-[prolipoprotein] + sn-glycerol 1-phosphate + H(+). Its pathway is protein modification; lipoprotein biosynthesis (diacylglyceryl transfer). Functionally, catalyzes the transfer of the diacylglyceryl group from phosphatidylglycerol to the sulfhydryl group of the N-terminal cysteine of a prolipoprotein, the first step in the formation of mature lipoproteins. The sequence is that of Phosphatidylglycerol--prolipoprotein diacylglyceryl transferase from Azoarcus sp. (strain BH72).